The chain runs to 150 residues: Retinal rod rhodopsin-sensitive cGMP 3',5'-cyclic phosphodiesterase subunit delta (150 aa).

Positions 144–150 are required for association with membranes; the sequence is RVRLFYV.

Belongs to the PDE6D/unc-119 family. Interacts with the prenylated catalytic subunits of PDE6, an oligomer composed of two catalytic chains (PDE6A and PDE6B) and two inhibitory chains (gamma); has no effect on enzyme activity but promotes the release of the prenylated enzyme from cell membrane. Interacts with prenylated GRK1 and GRK7. Interacts with prenylated Ras family members, including RAP2A and RAP2C. Interacts with prenylated RHEB and NRAS. Interacts with prenylated HRAS and KRAS. Interacts with RAB13 (prenylated form); dissociates RAB13 from membranes. Interacts with prenylated INPP5E. Interacts with RAB28 (prenylated form); the interaction promotes RAB28 delivery to the photoreceptor outer segments. Interacts with RPGR. Interacts with ARL2. Interacts with ARL3; the interaction occurs specifically with the GTP-bound form of ARL3. Interaction with ARL2 and ARL3 promotes release of farnesylated cargo proteins. Widely expressed. Detected in various tissues including spleen, prostate gland, testis, ovary, small intestine, colon, retina, and peripheral blood.

It is found in the cytoplasm. It localises to the cytosol. The protein localises to the cytoplasmic vesicle membrane. The protein resides in the cytoskeleton. Its subcellular location is the cilium basal body. Promotes the release of prenylated target proteins from cellular membranes. Modulates the activity of prenylated or palmitoylated Ras family members by regulating their subcellular location. Required for normal ciliary targeting of farnesylated target proteins, such as INPP5E. Required for RAB28 localization to the cone cell outer segments in the retina. Modulates the subcellular location of target proteins by acting as a GTP specific dissociation inhibitor (GDI). Increases the affinity of ARL3 for GTP by several orders of magnitude. Stabilizes ARL3-GTP by decreasing the nucleotide dissociation rate. In Homo sapiens (Human), this protein is Retinal rod rhodopsin-sensitive cGMP 3',5'-cyclic phosphodiesterase subunit delta (PDE6D).